The primary structure comprises 440 residues: Probable exopolygalacturonase C (440 aa).

An N-terminal signal peptide occupies residues 1 to 21 (MLITNPALLGILASLVPLALG). N-linked (GlcNAc...) asparagine glycosylation is found at N84 and N151. 3 PbH1 repeats span residues 188-210 (GDDITVSHAIVDATSTGGFPFNT), 217-238 (GTNISITDSVMFNGDDAIAVNT), and 240-261 (SHNIVFARNTIGYQSHGMSIGS). Residue N219 is glycosylated (N-linked (GlcNAc...) asparagine). Catalysis depends on D231, which acts as the Proton donor. The active site involves H255. N271 carries N-linked (GlcNAc...) asparagine glycosylation. The PbH1 4 repeat unit spans residues 272-293 (ITNLRFEDVTVIDALYAARFKS). The N-linked (GlcNAc...) asparagine glycan is linked to N313. Cysteines 389 and 395 form a disulfide. A glycan (N-linked (GlcNAc...) asparagine) is linked at N434.

Belongs to the glycosyl hydrolase 28 family.

The protein resides in the secreted. The catalysed reaction is [(1-&gt;4)-alpha-D-galacturonosyl](n) + H2O = alpha-D-galacturonate + [(1-&gt;4)-alpha-D-galacturonosyl](n-1). In terms of biological role, specific in hydrolyzing the terminal glycosidic bond of polygalacturonic acid and oligogalacturonates. The polypeptide is Probable exopolygalacturonase C (pgxC) (Aspergillus fumigatus (strain CBS 144.89 / FGSC A1163 / CEA10) (Neosartorya fumigata)).